Reading from the N-terminus, the 328-residue chain is N-acetyl-gamma-glutamyl-phosphate reductase (328 aa).

Cys143 is an active-site residue.

Belongs to the NAGSA dehydrogenase family. Type 1 subfamily.

Its subcellular location is the cytoplasm. The catalysed reaction is N-acetyl-L-glutamate 5-semialdehyde + phosphate + NADP(+) = N-acetyl-L-glutamyl 5-phosphate + NADPH + H(+). Its pathway is amino-acid biosynthesis; L-arginine biosynthesis; N(2)-acetyl-L-ornithine from L-glutamate: step 3/4. Its function is as follows. Catalyzes the NADPH-dependent reduction of N-acetyl-5-glutamyl phosphate to yield N-acetyl-L-glutamate 5-semialdehyde. The protein is N-acetyl-gamma-glutamyl-phosphate reductase of Methanosphaerula palustris (strain ATCC BAA-1556 / DSM 19958 / E1-9c).